We begin with the raw amino-acid sequence, 335 residues long: Zinc-type alcohol dehydrogenase-like protein SAS2087 (335 aa).

Belongs to the zinc-containing alcohol dehydrogenase family. Quinone oxidoreductase subfamily.

The polypeptide is Zinc-type alcohol dehydrogenase-like protein SAS2087 (Staphylococcus aureus (strain MSSA476)).